A 512-amino-acid chain; its full sequence is Reduced folate transporter (512 aa).

An N-acetylmethionine modification is found at Met1. At 1–29 (MVPTGQVAEKQAYEEPRQDHELKSWRCLV) the chain is on the cytoplasmic side. The helical transmembrane segment at 30 to 50 (FYLCFFGFMAQLRPGESFITP) threads the bilayer. Folate contacts are provided by Ile48 and Thr49. Residues 51 to 62 (FLLERKFTKEQV) are Extracellular-facing. The helical transmembrane segment at 63-85 (TNEIIPMLPYSHLAVLVPVFLLT) threads the bilayer. The Cytoplasmic segment spans residues 86–89 (DYLR). Residues 90-110 (YKPVLVLQCLSFVCVWLLLLL) form a helical membrane-spanning segment. The Extracellular segment spans residues 111–114 (GTSV). Residues 115-137 (VHMQLMEVFYSVTMAARIAYSSY) traverse the membrane as a helical segment. Residues Glu121 and Arg131 each coordinate folate. At 138 to 151 (IFSLVHPSRYQRMA) the chain is on the cytoplasmic side. Residues 152 to 176 (SYSRAAVLLGVFISSVLGQALVTVG) traverse the membrane as a helical segment. Residue Val162 participates in folate binding. Topologically, residues 177-181 (HISTY) are extracellular. Residues 182–200 (TLNCVSLGFILFSLVLSLF) form a helical membrane-spanning segment. The Cytoplasmic segment spans residues 201 to 266 (LKRPKRSLFF…ELVENARQPQ (66 aa)). A helical transmembrane segment spans residues 267–292 (LRLWCLWWVFNSSGYYLITYYVHVLW). Residues Tyr281, Tyr282, and Tyr286 each coordinate folate. Over 293–300 (RSTDSSLS) the chain is Extracellular. The chain crosses the membrane as a helical span at residues 301–323 (YNGAVDAASTLLSAITSFSAGFL). The Cytoplasmic segment spans residues 324-329 (SIRWTL). A helical membrane pass occupies residues 330–350 (WSKLVIAGVIAIQASLVFCMF). Over 351–353 (QIR) the chain is Extracellular. A helical membrane pass occupies residues 354-377 (DIWVCYVTFVLFRGAYQFLVPIAT). The folate site is built by Arg366 and Gln370. The Cytoplasmic portion of the chain corresponds to 378–391 (FQIASSLSKELCAL). The chain crosses the membrane as a helical span at residues 392-415 (VFGINTFLATALKTCITLVVSDKR). Residues 400 to 412 (ATALKTCITLVVS) form a required for substrate-binding region. Residues 416-423 (GLGLQVRD) lie on the Extracellular side of the membrane. Residues 424–448 (QFRIYFIYFLMLSITCFAWAGLDGL) traverse the membrane as a helical segment. Residues 449-512 (RYCQRGRHQP…RGDLRVEAKA (64 aa)) lie on the Cytoplasmic side of the membrane. Phosphoserine is present on residues Ser467, Ser472, and Ser477. Positions 478-512 (LQDGDLRGPQPSAPQLLSEDGMEDDRGDLRVEAKA) are disordered.

The protein belongs to the reduced folate carrier (RFC) transporter (TC 2.A.48) family.

The protein localises to the cell membrane. It is found in the apical cell membrane. It localises to the basolateral cell membrane. It carries out the reaction 5-amino-1-(5-phospho-beta-D-ribosyl)imidazole-4-carboxamide(in) + (6S)-5-methyl-5,6,7,8-tetrahydrofolate(out) = 5-amino-1-(5-phospho-beta-D-ribosyl)imidazole-4-carboxamide(out) + (6S)-5-methyl-5,6,7,8-tetrahydrofolate(in). In terms of biological role, antiporter that mediates the import of reduced folates, driven by the export of organic anions. Also acts as an importer of immunoreactive cyclic dinucleotides, but with a lower transporter activity. Mechanistically, acts as a secondary active transporter, which exports intracellular organic anions down their concentration gradients to facilitate the uptake of its substrates. Has high affinity for N5-methyltetrahydrofolate, the predominant circulating form of folate. Also mediates the import of antifolate drug methotrexate. 5-amino-4-imidazolecarboxamide riboside (AICAR), when phosphorylated to AICAR monophosphate, can serve as an organic anion for antiporter activity. The protein is Reduced folate transporter of Mus musculus (Mouse).